We begin with the raw amino-acid sequence, 154 residues long: Aspartate carbamoyltransferase regulatory chain (154 aa).

Cysteine 109, cysteine 114, cysteine 138, and cysteine 141 together coordinate Zn(2+).

The protein belongs to the PyrI family. In terms of assembly, contains catalytic and regulatory chains. Zn(2+) is required as a cofactor.

In terms of biological role, involved in allosteric regulation of aspartate carbamoyltransferase. In Serratia proteamaculans (strain 568), this protein is Aspartate carbamoyltransferase regulatory chain.